A 248-amino-acid chain; its full sequence is Phosphate import ATP-binding protein PstB (248 aa).

In terms of domain architecture, ABC transporter spans 1–243; the sequence is MAVNDVNVFY…PQHNLTQGYI (243 aa). 33–40 is an ATP binding site; it reads GPSGCGKS.

It belongs to the ABC transporter superfamily. Phosphate importer (TC 3.A.1.7) family. As to quaternary structure, the complex is composed of two ATP-binding proteins (PstB), two transmembrane proteins (PstC and PstA) and a solute-binding protein (PstS).

The protein resides in the cell inner membrane. It carries out the reaction phosphate(out) + ATP + H2O = ADP + 2 phosphate(in) + H(+). In terms of biological role, part of the ABC transporter complex PstSACB involved in phosphate import. Responsible for energy coupling to the transport system. The sequence is that of Phosphate import ATP-binding protein PstB from Rhodospirillum rubrum (strain ATCC 11170 / ATH 1.1.1 / DSM 467 / LMG 4362 / NCIMB 8255 / S1).